Consider the following 154-residue polypeptide: Protein X (154 aa).

Residues 68–117 (PCALRFTSARCMETTVNAHQILPKVLHKRTLGLPAMSTTDLEAYFKDSVF) are mitochondrial targeting sequence.

The protein belongs to the orthohepadnavirus protein X family. May form homodimer. May interact with host CEBPA, CFLAR, CREB1, DDB1, E4F1, HBXIP, HSPD1/HSP60, NFKBIA, POLR2E and SMAD4. Interacts with host SMC5-SMC6 complex and induces its degradation. Interacts with host TRPC4AP; leading to prevent ubiquitination of TRPC4AP. Interacts with host PLSCR1; this interaction promotes ubiquitination and degradation of HBx and impairs HBx-mediated cell proliferation. In terms of processing, a fraction may be phosphorylated in insect cells and HepG2 cells, a human hepatoblastoma cell line. Phosphorylated in vitro by host protein kinase C or mitogen-activated protein kinase. N-acetylated in insect cells.

It localises to the host cytoplasm. The protein resides in the host nucleus. It is found in the host mitochondrion. Multifunctional protein that plays a role in silencing host antiviral defenses and promoting viral transcription. Does not seem to be essential for HBV infection. May be directly involved in development of cirrhosis and liver cancer (hepatocellular carcinoma). Most of cytosolic activities involve modulation of cytosolic calcium. The effect on apoptosis is controversial depending on the cell types in which the studies have been conducted. May induce apoptosis by localizing in mitochondria and causing loss of mitochondrial membrane potential. May also modulate apoptosis by binding host CFLAR, a key regulator of the death-inducing signaling complex (DISC). Promotes viral transcription by using the host E3 ubiquitin ligase DDB1 to target the SMC5-SMC6 complex to proteasomal degradation. This host complex would otherwise bind to viral episomal DNA, and prevents its transcription. Moderately stimulates transcription of many different viral and cellular transcription elements. Promoters and enhancers stimulated by HBx contain DNA binding sites for NF-kappa-B, AP-1, AP-2, c-EBP, ATF/CREB, or the calcium-activated factor NF-AT. This is Protein X from Homo sapiens (Human).